The chain runs to 435 residues: Histone acetyltransferase ESA1 (435 aa).

One can recognise a Tudor-knot domain in the interval 22–73; it reads IIGCKCWVEKDGEQRLAEILSINNRRQPPKFYVHYEDFNKRLDEWILASRIN. Over residues 78 to 89 the composition is skewed to basic and acidic residues; that stretch reads VTFPKPRDPDEK. The tract at residues 78 to 108 is disordered; that stretch reads VTFPKPRDPDEKKKKKQKKSATPQATDGETL. The region spanning 152-423 is the MYST-type HAT domain; that stretch reads SRVRNLSKII…IDPEKLIWKP (272 aa). The segment at 185–210 adopts a C2HC MYST-type; degenerate zinc-finger fold; sequence VYIDDFSLQYFGSKKQYARYRQKCTL. Positions 235–256 match the ESA1-RPD3 motif motif; it reads RTWCRNLCLLSKLFLDHKTLYY. Residue K252 is modified to N6-acetyllysine; by autocatalysis. Acetyl-CoA-binding positions include 293–297 and 302–308; these read ACILT and QRMGYGR. The active-site Proton donor/acceptor is the E328. S332 lines the acetyl-CoA pocket.

Belongs to the MYST (SAS/MOZ) family. As to quaternary structure, component of the NuA4 histone acetyltransferase complex. Interacts with arp4. In terms of processing, autoacetylation at Lys-252 is required for proper function.

It localises to the nucleus. It is found in the chromosome. It catalyses the reaction L-lysyl-[histone] + acetyl-CoA = N(6)-acetyl-L-lysyl-[histone] + CoA + H(+). The catalysed reaction is L-lysyl-[protein] + acetyl-CoA = N(6)-acetyl-L-lysyl-[protein] + CoA + H(+). It carries out the reaction 2-hydroxyisobutanoyl-CoA + L-lysyl-[protein] = N(6)-(2-hydroxyisobutanoyl)-L-lysyl-[protein] + CoA + H(+). The enzyme catalyses (2E)-butenoyl-CoA + L-lysyl-[protein] = N(6)-(2E)-butenoyl-L-lysyl-[protein] + CoA + H(+). Catalytic component of the NuA4 histone acetyltransferase (HAT) complex which is involved in epigenetic transcriptional activation of selected genes principally by acetylation of nucleosomal histones H4, H3, H2B, H2A and H2A variant H2A.Z. Acetylates histone H4 to form H4K5ac, H4K8ac, H4K12ac and H4K16ac, histone H3 to form H3K14ac, and histone H2A to form H2AK4ac and H2AK7ac. The NuA4 complex is involved in the DNA damage response and is required for chromosome segregation. The NuA4 complex plays a direct role in repair of DNA double-strand breaks (DSBs) through homologous recombination. Recruitment to promoters depends on H3K4me. Also acetylates non-histone proteins. In addition to protein acetyltransferase, can use different acyl-CoA substrates, such as 2-hydroxyisobutanoyl-CoA (2-hydroxyisobutyryl-CoA) or (2E)-butenoyl-CoA (crotonyl-CoA), and is able to mediate protein 2-hydroxyisobutyrylation and crotonylation, respectively. The polypeptide is Histone acetyltransferase ESA1 (ESA1) (Eremothecium gossypii (strain ATCC 10895 / CBS 109.51 / FGSC 9923 / NRRL Y-1056) (Yeast)).